The chain runs to 475 residues: F-box protein SKIP22 (475 aa).

Residues 114 to 133 (DQAKSNPNTSVEDPEGDISG) form a disordered region. The F-box domain occupies 319–365 (PPCLMRLPTELKLKILELLPGVSIGNMACVCTEMRYLASDNDLWKQK).

Part of a SCF (ASK-cullin-F-box) protein ligase complex. Interacts with SKP1A/ASK1 and SPK1B/ASK2.

It localises to the nucleus. It functions in the pathway protein modification; protein ubiquitination. In terms of biological role, component of SCF(ASK-cullin-F-box) E3 ubiquitin ligase complexes, which may mediate the ubiquitination and subsequent proteasomal degradation of target proteins. In Arabidopsis thaliana (Mouse-ear cress), this protein is F-box protein SKIP22 (SKIP22).